The primary structure comprises 486 residues: E3 ubiquitin-protein ligase TRIM58 (486 aa).

The RING-type zinc finger occupies 16 to 61; the sequence is CPVCLDFLQEPVSVDCGHSFCLRCISEFCEKSDGAQGGVYACPQCR. The B box-type zinc finger occupies 91 to 132; the sequence is PGARRCARHGEDLSRFCEEDEAALCWVCDAGPEHRTHRTAPL. Zn(2+) contacts are provided by cysteine 96, histidine 99, cysteine 118, and histidine 124. Residues 193–242 are a coiled coil; it reads LAQEEQRQLRRLEAEERATLQRLRESKSRLVQQSKALKELADELQERCQR. The 191-residue stretch at 273–463 folds into the B30.2/SPRY domain; it reads LKTACCIPGR…TPLILPPTTI (191 aa).

The protein belongs to the TRIM/RBCC family. Expressed in erythroblasts.

The enzyme catalyses S-ubiquitinyl-[E2 ubiquitin-conjugating enzyme]-L-cysteine + [acceptor protein]-L-lysine = [E2 ubiquitin-conjugating enzyme]-L-cysteine + N(6)-ubiquitinyl-[acceptor protein]-L-lysine.. The protein operates within protein modification; protein ubiquitination. Its function is as follows. E3 ubiquitin ligase induced during late erythropoiesis. Directly binds and ubiquitinates the intermediate chain of the microtubule motor dynein (DYNC1LI1/DYNC1LI2), stimulating the degradation of the dynein holoprotein complex. May participate in the erythroblast enucleation process through regulation of nuclear polarization. The protein is E3 ubiquitin-protein ligase TRIM58 (TRIM58) of Homo sapiens (Human).